The following is a 337-amino-acid chain: 2-oxoglutarate-dependent ethylene/succinate-forming enzyme (337 aa).

The Fe2OG dioxygenase domain maps to 166-286 (GWHHMRVLRF…RFACAYFHEP (121 aa)). Fe cation is bound by residues His189 and His268.

It belongs to the iron/ascorbate-dependent oxidoreductase family. As to quaternary structure, monomer. It depends on Fe(2+) as a cofactor.

It carries out the reaction 2-oxoglutarate + O2 + 2 H(+) = ethene + 3 CO2 + H2O. The catalysed reaction is L-arginine + 2-oxoglutarate + O2 = guanidine + L-glutamate 5-semialdehyde + succinate + CO2. It participates in alkene biosynthesis; ethylene biosynthesis via 2-oxoglutarate. Its function is as follows. Simultaneously catalyzes two reactions, namely formation of ethylene and of succinate from 2-oxoglutarate. The polypeptide is 2-oxoglutarate-dependent ethylene/succinate-forming enzyme (efe) (Pseudomonas syringae pv. pisi).